A 319-amino-acid chain; its full sequence is Olfactory receptor 8U3 (319 aa).

The Extracellular portion of the chain corresponds to 1–25 (MAEVNISYVSEFILKGITDRPELQA). Residue Asn-5 is glycosylated (N-linked (GlcNAc...) asparagine). The chain crosses the membrane as a helical span at residues 26–46 (PCFVMFLTIYLVTVLGNLGLI). Residues 47–54 (VIIRVDSR) lie on the Cytoplasmic side of the membrane. A helical transmembrane segment spans residues 55-75 (LHTPMYFFLSHLAFVDLCYSS). The Extracellular segment spans residues 76 to 99 (AITPKMMVNFVVERNTIPFHACAT). A disulfide bridge links Cys-97 with Cys-189. A helical membrane pass occupies residues 100–120 (QLGCFLTFMITECFLLASMAY). The Cytoplasmic segment spans residues 121-133 (DRYVAICSPLHYS). Residues 134–154 (TLMSKRVCIQLVAVPYVYSFL) form a helical membrane-spanning segment. Topologically, residues 155-196 (VALFHTIITFRLTYCGPNVINHFYCDDLPLLALSCSDTHMKE) are extracellular. Residues 197-217 (ILIFAFAGFDMICSSSIVLTS) traverse the membrane as a helical segment. Residues 218–237 (YLFIIAAILRIRSTQGRRKA) lie on the Cytoplasmic side of the membrane. Residues 238–258 (ISTCGSHMVAVTIFYGTLIFM) traverse the membrane as a helical segment. Over 259-271 (YLQPKSNHSLDTD) the chain is Extracellular. Asn-265 carries an N-linked (GlcNAc...) asparagine glycan. The helical transmembrane segment at 272–292 (KMASVFYTVVIPMLNPLIYSL) threads the bilayer. The Cytoplasmic portion of the chain corresponds to 293-319 (RNKEVKDASKKALDKGYETLKILRLSK).

This sequence belongs to the G-protein coupled receptor 1 family.

The protein localises to the cell membrane. Functionally, potential odorant receptor. The protein is Olfactory receptor 8U3 of Mus musculus (Mouse).